The following is a 389-amino-acid chain: Ankyrin repeat domain-containing protein 42 (389 aa).

Positions 1 to 21 are disordered; the sequence is MPGVANSGPSTSSRETANPCS. The span at 7–19 shows a compositional bias: polar residues; the sequence is SGPSTSSRETANP. ANK repeat units follow at residues 25–60, 64–93, 97–126, 130–159, 163–192, 200–232, 235–265, 269–298, and 302–332; these read VHFGSIHDAVRAGDVKQLSEIVCLHWLLWHGADITH, RGWTASHIAAIRGQDACVQALIMNGANLTA, RGCTPLHLAATHGHSFTLQIMLRSGVDPSV, REWRPVHYAAFHGRLGCLQLLVKWGCSIED, NGNLPVHLAAMEGHLHCFKFLVSRMSSATQ, NGENVLDLAQRFFKQNILQFIQGAEYEGKDLED, TLAFPGHVAAFKGDLGMLKKLVEDGVININE, NGSTPMHKAAGQGHIECLQWLIKMGADSNI, and AGERPSDVAKRFAHLAAVKLLEELQKYDIDD.

This chain is Ankyrin repeat domain-containing protein 42 (ANKRD42), found in Homo sapiens (Human).